The primary structure comprises 340 residues: Phosphoribosylformylglycinamidine cyclo-ligase (340 aa).

It belongs to the AIR synthase family.

It is found in the cytoplasm. It catalyses the reaction 2-formamido-N(1)-(5-O-phospho-beta-D-ribosyl)acetamidine + ATP = 5-amino-1-(5-phospho-beta-D-ribosyl)imidazole + ADP + phosphate + H(+). It participates in purine metabolism; IMP biosynthesis via de novo pathway; 5-amino-1-(5-phospho-D-ribosyl)imidazole from N(2)-formyl-N(1)-(5-phospho-D-ribosyl)glycinamide: step 2/2. The sequence is that of Phosphoribosylformylglycinamidine cyclo-ligase from Streptococcus pneumoniae serotype 2 (strain D39 / NCTC 7466).